The primary structure comprises 525 residues: GMP synthase [glutamine-hydrolyzing] (525 aa).

A Glutamine amidotransferase type-1 domain is found at 9 to 207 (RILILDFGSQ…VRDICQCEAL (199 aa)). Catalysis depends on Cys-86, which acts as the Nucleophile. Residues His-181 and Glu-183 contribute to the active site. Residues 208 to 400 (WTPAKIIDDA…LGLPYDMLYR (193 aa)) enclose the GMPS ATP-PPase domain. 235-241 (SGGVDSS) is an ATP binding site.

Homodimer.

It carries out the reaction XMP + L-glutamine + ATP + H2O = GMP + L-glutamate + AMP + diphosphate + 2 H(+). The protein operates within purine metabolism; GMP biosynthesis; GMP from XMP (L-Gln route): step 1/1. Functionally, catalyzes the synthesis of GMP from XMP. In Escherichia fergusonii (strain ATCC 35469 / DSM 13698 / CCUG 18766 / IAM 14443 / JCM 21226 / LMG 7866 / NBRC 102419 / NCTC 12128 / CDC 0568-73), this protein is GMP synthase [glutamine-hydrolyzing].